Consider the following 555-residue polypeptide: MATRPPLSPPVNETEHSVSRITREGKRITYKLNVMQQPERARACGAGAKSSADRRPVDPPPVVELRIFESDPNDDVHKTDITFAYNANFFLFATLETARPMAQGRLAPTPTFPVLTGVPVAGVAYLDRPSQAGYFIFPDLSVRHEGIYRLSFHLYEETKDSKDADESAPIRSPMMKGKPSIPKSFLNFRLEVVSVPFTVFSAKKFPGLTTSTSLSRIIAEQGCRVRIRRDVRMRRRGDKRSDDYDFDEERSHRGRIPDRYSTPDAYANPVERPRSTSIGSVDPAFSYGPEASRRPSATEYGFSNPQAYPRAIPPAPAPAPPSSSTPTPVAPIAPSRSSSYTSHLSFGATRTQYPAPQLPGTPQSATTPTQVYSPHPTYTHARNPSTSTEYEPMPSGYPPSRLPAERSTYSKPLPPIRVLHHSDPTTYRAMANPVPPRAQTPSNAAPSLPPIASISAEYSNNLPQPPSNLAPSPNREPRGFLWDTRAAASSKRPHEDAFSHSERPLYNGMRPDNDSYPSADRRPSDVHRATLLSDRDEMAYKRANGRMATKISPAI.

Disordered regions lie at residues M1–R23, E39–P60, and R234–S533. Residues E13–R23 are compositionally biased toward basic and acidic residues. In terms of domain architecture, Velvet spans G25–R228. The short motif at E39–C44 is the Nuclear localization signal element. The span at K239–D258 shows a compositional bias: basic and acidic residues. Positions A311–P331 are enriched in pro residues. Composition is skewed to polar residues over residues R336–Y372 and H380–E389. Residues Q439 to G479 form a PEST region. Composition is skewed to basic and acidic residues over residues R492–R503 and A519–S533.

This sequence belongs to the velvet family. VeA subfamily. Component of the heterotrimeric velvet complex composed of laeA, veA and velB; VeA acting as a bridging protein between laeA and velB.

Its subcellular location is the nucleus. The protein localises to the cytoplasm. In terms of biological role, component of the velvet transcription factor complex that controls sexual/asexual developmental ratio in response to light, promoting sexual development in the darkness while stimulating asexual sporulation under illumination. The velvet complex hat acts as a global regulator for secondary metabolite gene expression. Increases spore dispersing capacity by impacting conidiophore architecture. This is Developmental and secondary metabolism regulator veA from Aspergillus niger (strain ATCC 1015 / CBS 113.46 / FGSC A1144 / LSHB Ac4 / NCTC 3858a / NRRL 328 / USDA 3528.7).